The sequence spans 101 residues: Phosphoribosyl-AMP cyclohydrolase (101 aa).

A Mg(2+)-binding site is contributed by aspartate 71. A Zn(2+)-binding site is contributed by cysteine 72. Mg(2+) contacts are provided by aspartate 73 and aspartate 75. Zn(2+) is bound by residues cysteine 88 and cysteine 95.

The protein belongs to the PRA-CH family. In terms of assembly, homodimer. The cofactor is Mg(2+). Requires Zn(2+) as cofactor.

It localises to the cytoplasm. The catalysed reaction is 1-(5-phospho-beta-D-ribosyl)-5'-AMP + H2O = 1-(5-phospho-beta-D-ribosyl)-5-[(5-phospho-beta-D-ribosylamino)methylideneamino]imidazole-4-carboxamide. It participates in amino-acid biosynthesis; L-histidine biosynthesis; L-histidine from 5-phospho-alpha-D-ribose 1-diphosphate: step 3/9. Catalyzes the hydrolysis of the adenine ring of phosphoribosyl-AMP. The polypeptide is Phosphoribosyl-AMP cyclohydrolase (Bacillus cereus (strain ZK / E33L)).